Consider the following 635-residue polypeptide: DNA mismatch repair protein MutL (635 aa).

The tract at residues 359–399 (GTNKYAQPEAAKSSAAEQAVARERSSARERAAPAYKEDHPY) is disordered. The segment covering 364 to 377 (AQPEAAKSSAAEQA) has biased composition (low complexity). Over residues 378–399 (VARERSSARERAAPAYKEDHPY) the composition is skewed to basic and acidic residues.

The protein belongs to the DNA mismatch repair MutL/HexB family.

Its function is as follows. This protein is involved in the repair of mismatches in DNA. It is required for dam-dependent methyl-directed DNA mismatch repair. May act as a 'molecular matchmaker', a protein that promotes the formation of a stable complex between two or more DNA-binding proteins in an ATP-dependent manner without itself being part of a final effector complex. This Yersinia pestis bv. Antiqua (strain Antiqua) protein is DNA mismatch repair protein MutL.